Consider the following 403-residue polypeptide: L-cysteine:1D-myo-inositol 2-amino-2-deoxy-alpha-D-glucopyranoside ligase (403 aa).

Residue Cys-43 participates in Zn(2+) binding. Residues 43–46 (CGIT), Thr-58, and 81–83 (NTT) contribute to the L-cysteinyl-5'-AMP site. The 'HIGH' region motif lies at 45-55 (ITPYDATHLGH). A 'ERGGDP' region motif is present at residues 183–188 (ERGGDP). Trp-223 serves as a coordination point for L-cysteinyl-5'-AMP. Cys-227 contacts Zn(2+). 245–247 (GSD) serves as a coordination point for L-cysteinyl-5'-AMP. His-252 lines the Zn(2+) pocket. Val-279 contributes to the L-cysteinyl-5'-AMP binding site. Positions 285–289 (KMSKS) match the 'KMSKS' region motif.

Belongs to the class-I aminoacyl-tRNA synthetase family. MshC subfamily. As to quaternary structure, monomer. The cofactor is Zn(2+).

It carries out the reaction 1D-myo-inositol 2-amino-2-deoxy-alpha-D-glucopyranoside + L-cysteine + ATP = 1D-myo-inositol 2-(L-cysteinylamino)-2-deoxy-alpha-D-glucopyranoside + AMP + diphosphate + H(+). Its function is as follows. Catalyzes the ATP-dependent condensation of GlcN-Ins and L-cysteine to form L-Cys-GlcN-Ins. The protein is L-cysteine:1D-myo-inositol 2-amino-2-deoxy-alpha-D-glucopyranoside ligase of Thermobispora bispora (strain ATCC 19993 / DSM 43833 / CBS 139.67 / JCM 10125 / KCTC 9307 / NBRC 14880 / R51).